A 219-amino-acid chain; its full sequence is Cytidylate kinase (219 aa).

Residue 11–19 (GTAGSGKTA) coordinates ATP.

It belongs to the cytidylate kinase family. Type 1 subfamily.

Its subcellular location is the cytoplasm. The catalysed reaction is CMP + ATP = CDP + ADP. It carries out the reaction dCMP + ATP = dCDP + ADP. The chain is Cytidylate kinase from Mesoplasma florum (strain ATCC 33453 / NBRC 100688 / NCTC 11704 / L1) (Acholeplasma florum).